The sequence spans 638 residues: MIDTTRYPRLSRIHTPDDLRRFDEAELTVIAEELRSYLIESVGKSGGHFAAGLGVIELTVALHYLYQTPVDQLVWDVGHQTYPHKILTGRRDQIHTVKQKDGVAPFPKREESVYDTFGVGHSSTSISAALGMAIAAQRNGDDRKVVAVIGDGAMTAGMVYEALNHAGGMDPEPNLLVILNDNRMSISEAVGGLTKMLGRASGSRTLNAIREGGKKILGDKKNNPTARFVRRWEEHWKGMFVPSTLFEEMGFHYTGPIDGHDLPRLVGALKTLQTLKGPQLLHVITTKGKGYELAEGDQIGYHAVSPFDPSKGLVAKGGAKKPTYTDVFSDWVCDMAAAEPKLLVITPAMREGSGLVRFSKEYPQRYFDVAIAEQHAVTLAAGMATQGAKPVVAIYSTFLQRGYDQLVHDVAVQQLDVLFAIDRGGVVGPDGATHAGNLDLSFLRCVPHMVVMAPADEAECRQMLSTGMQYQGPAAVRYPRGTGPGAALDSSLATLPIGKAQLRHSGTRIALLGFGATVDAAEAVGRDLGLTVVNMRFVKPLDKAMLLELAKTHEGFVTIEDNVVAGGAGSGVSELLNAEAITLPMLHLGLPDSFQHHASREDLLAEAGIDQAGIRTAVLKRWPQLMTGKTPSLNAAAG.

Residues His79 and 120–122 (GHS) each bind thiamine diphosphate. Position 151 (Asp151) interacts with Mg(2+). Thiamine diphosphate-binding positions include 152 to 153 (GA), Asn182, Tyr291, and Glu373. Mg(2+) is bound at residue Asn182.

This sequence belongs to the transketolase family. DXPS subfamily. In terms of assembly, homodimer. Mg(2+) serves as cofactor. It depends on thiamine diphosphate as a cofactor.

It carries out the reaction D-glyceraldehyde 3-phosphate + pyruvate + H(+) = 1-deoxy-D-xylulose 5-phosphate + CO2. It participates in metabolic intermediate biosynthesis; 1-deoxy-D-xylulose 5-phosphate biosynthesis; 1-deoxy-D-xylulose 5-phosphate from D-glyceraldehyde 3-phosphate and pyruvate: step 1/1. Functionally, catalyzes the acyloin condensation reaction between C atoms 2 and 3 of pyruvate and glyceraldehyde 3-phosphate to yield 1-deoxy-D-xylulose-5-phosphate (DXP). The polypeptide is 1-deoxy-D-xylulose-5-phosphate synthase (Xanthomonas oryzae pv. oryzae (strain MAFF 311018)).